The chain runs to 449 residues: Tubulin alpha-2B chain (449 aa).

A GTP-binding site is contributed by glutamine 11. Residue lysine 40 is modified to N6-acetyllysine. The GTP site is built by glutamate 71, serine 140, glycine 144, threonine 145, threonine 179, asparagine 206, and asparagine 228. Glutamate 71 provides a ligand contact to Mg(2+). Residue glutamate 254 is part of the active site.

This sequence belongs to the tubulin family. Dimer of alpha and beta chains. A typical microtubule is a hollow water-filled tube with an outer diameter of 25 nm and an inner diameter of 15 nM. Alpha-beta heterodimers associate head-to-tail to form protofilaments running lengthwise along the microtubule wall with the beta-tubulin subunit facing the microtubule plus end conferring a structural polarity. Microtubules usually have 13 protofilaments but different protofilament numbers can be found in some organisms and specialized cells. Requires Mg(2+) as cofactor. Post-translationally, acetylation of alpha chains at Lys-40 stabilizes microtubules and affects affinity and processivity of microtubule motors. This modification has a role in multiple cellular functions, ranging from cell motility, cell cycle progression or cell differentiation to intracellular trafficking and signaling.

The protein resides in the cytoplasm. The protein localises to the cytoskeleton. It is found in the spindle. Its subcellular location is the nucleus. It catalyses the reaction GTP + H2O = GDP + phosphate + H(+). Functionally, tubulin is the major constituent of microtubules, a cylinder consisting of laterally associated linear protofilaments composed of alpha- and beta-tubulin heterodimers. Microtubules grow by the addition of GTP-tubulin dimers to the microtubule end, where a stabilizing cap forms. Below the cap, tubulin dimers are in GDP-bound state, owing to GTPase activity of alpha-tubulin. This is Tubulin alpha-2B chain (ALTBE) from Physarum polycephalum (Slime mold).